The chain runs to 118 residues: NADH-quinone oxidoreductase subunit A (118 aa).

3 helical membrane-spanning segments follow: residues 5-25 (YLGI…AFAV), 61-81 (FLYA…YPWA), and 90-110 (FAIV…WYAW).

Belongs to the complex I subunit 3 family. As to quaternary structure, NDH-1 is composed of 14 different subunits. Subunits NuoA, H, J, K, L, M, N constitute the membrane sector of the complex.

The protein localises to the cell membrane. The catalysed reaction is a quinone + NADH + 5 H(+)(in) = a quinol + NAD(+) + 4 H(+)(out). Its function is as follows. NDH-1 shuttles electrons from NADH, via FMN and iron-sulfur (Fe-S) centers, to quinones in the respiratory chain. The immediate electron acceptor for the enzyme in this species is believed to be a menaquinone. Couples the redox reaction to proton translocation (for every two electrons transferred, four hydrogen ions are translocated across the cytoplasmic membrane), and thus conserves the redox energy in a proton gradient. The sequence is that of NADH-quinone oxidoreductase subunit A from Heliobacterium modesticaldum (strain ATCC 51547 / Ice1).